Here is a 680-residue protein sequence, read N- to C-terminus: MIDRYKHQQLRIGSVSPQQISAWANKILPNGEIVGEVTKPYTFHYKTNKPEKDGLFCERIFGPIKSGICACGNYRVIRNEKEDQKFCEQCGVEFVDSRIRRYQMGYIKLACPVTHVWYLKRLPSYIANLLDKPLKELEGLVYCDFSFARPIAKKPTFLRLRGSFEYEIQSWKYSIPLFFTTQCFDTFRNREISTGAGAIREQLADLDLRIIIDYSSVEWKELGEEGPTGNEWEDRKVGRRKDFLVRRVELAKHFIRTNIEPEWMVLCLLPVLPPELRPIIQIDGGKLMSSDINELYRRVIYRNNTLIDLLTTSRSTPGELVMCQEKLVQEAVDTLLDNGIRGQPMRDGHNKVYKSFSDVIEGKEGRFRETMLGKRVDYSGRSVIVVGPSLSLHRCGLPREIAIELFQIFVIRGLIRQHLASNIGVAKSKIREKEPIVWEILHEVMQGHPVLLNRAPTLHRLGIQAFQPILVEGRAICLHPLVCKGFNADFDGDQMAVHVPLSLEAQAEARLLMFSHMNLLSPAIGDPISVPTQDMLIGLYVLTSGNRRGICANRYNPCNRRNYQNKRIDGNNDKYTKEPLFSNSYDALGAYRQKRIHLDSPLWLRWQLDQRAITSREAPIEVHYESLGTYHEIYEHYLIVRNIKKEILCIYIRTTVGHISLYREIEEAIQGFCQACSDGI.

Zn(2+) is bound by residues C69, C71, C87, and C90. Residues D489, D491, and D493 each coordinate Mg(2+).

It belongs to the RNA polymerase beta' chain family. RpoC1 subfamily. In terms of assembly, in plastids the minimal PEP RNA polymerase catalytic core is composed of four subunits: alpha, beta, beta', and beta''. When a (nuclear-encoded) sigma factor is associated with the core the holoenzyme is formed, which can initiate transcription. It depends on Mg(2+) as a cofactor. The cofactor is Zn(2+).

The protein resides in the plastid. The protein localises to the chloroplast. The enzyme catalyses RNA(n) + a ribonucleoside 5'-triphosphate = RNA(n+1) + diphosphate. Functionally, DNA-dependent RNA polymerase catalyzes the transcription of DNA into RNA using the four ribonucleoside triphosphates as substrates. This is DNA-directed RNA polymerase subunit beta' from Manihot esculenta (Cassava).